The chain runs to 356 residues: (+)-(1(10)E,4E,6S,7R)-germacradien-6-ol synthase (356 aa).

Positions 86 and 91 each coordinate Mg(2+). The DDXXXD motif motif lies at 86–91 (DDEYCD). Arginine 181 lines the substrate pocket. Asparagine 227 and serine 231 together coordinate Mg(2+). Substrate is bound at residue lysine 234. A Mg(2+)-binding site is contributed by glutamate 235. 314 to 315 (RY) contributes to the substrate binding site.

This sequence belongs to the terpene synthase family. Requires Mg(2+) as cofactor.

The catalysed reaction is (2E,6E)-farnesyl diphosphate + H2O = (+)-(1(10)E,4E,6S,7R)-germacradien-6-ol + diphosphate. It functions in the pathway secondary metabolite biosynthesis; terpenoid biosynthesis. Functionally, catalyzes the conversion of (2E,6E)-farnesyl diphosphate (FPP) to yield the sesquiterpene (+)-(1(10)E,4E,6S,7R)-germacradien-6-ol via a putative 1,10-cyclization, which could require the abstraction of the pyrophosphate from FPP to yield the (E,E)-germacradienyl cation. The only accepted substrate is farnesyl diphosphate (FPP). This is (+)-(1(10)E,4E,6S,7R)-germacradien-6-ol synthase from Streptomyces pratensis (strain ATCC 33331 / IAF-45CD).